Reading from the N-terminus, the 232-residue chain is Probable dihydroorotate dehydrogenase B (NAD(+)), electron transfer subunit (232 aa).

The FAD-binding FR-type domain occupies 1–86 (MYYTRITQIE…RGAFGSAFTP (86 aa)). Residues Cys202, Cys207, Cys210, and Cys219 each coordinate [2Fe-2S] cluster.

It belongs to the PyrK family. In terms of assembly, heterotetramer of 2 PyrK and 2 PyrD type B subunits. The cofactor is [2Fe-2S] cluster. FAD serves as cofactor.

The protein operates within pyrimidine metabolism; UMP biosynthesis via de novo pathway; orotate from (S)-dihydroorotate (NAD(+) route): step 1/1. In terms of biological role, responsible for channeling the electrons from the oxidation of dihydroorotate from the FMN redox center in the PyrD type B subunit to the ultimate electron acceptor NAD(+). This is Probable dihydroorotate dehydrogenase B (NAD(+)), electron transfer subunit from Archaeoglobus fulgidus (strain ATCC 49558 / DSM 4304 / JCM 9628 / NBRC 100126 / VC-16).